The following is a 367-amino-acid chain: 2-oxoisovalerate dehydrogenase subunit alpha (367 aa).

Residues Phe-66, Tyr-95, 128 to 131 (MPEH), and Ser-144 each bind substrate. 94-96 (YYR) contacts thiamine diphosphate. Residues 144 to 146 (SPI), 174 to 180 (GDGATSE), 204 to 208 (NFYAI), and His-273 contribute to the thiamine diphosphate site. Mg(2+) contacts are provided by Asp-175, Asn-204, and Tyr-206.

Belongs to the BCKDHA family. Heterotetramer of two alpha and two beta chains. Directly associated with ODBB in the E1 complex. Thiamine diphosphate serves as cofactor.

The catalysed reaction is N(6)-[(R)-lipoyl]-L-lysyl-[protein] + 3-methyl-2-oxobutanoate + H(+) = N(6)-[(R)-S(8)-2-methylpropanoyldihydrolipoyl]-L-lysyl-[protein] + CO2. The branched-chain alpha-keto dehydrogenase complex catalyzes the overall conversion of alpha-keto acids to acyl-CoA and CO(2). It contains multiple copies of three enzymatic components: branched-chain alpha-keto acid decarboxylase (E1), lipoamide acyltransferase (E2) and lipoamide dehydrogenase (E3). The polypeptide is 2-oxoisovalerate dehydrogenase subunit alpha (Thermus thermophilus (strain ATCC 27634 / DSM 579 / HB8)).